We begin with the raw amino-acid sequence, 71 residues long: Translation initiation factor IF-1 (71 aa).

Residues Met1–Lys71 enclose the S1-like domain.

It belongs to the IF-1 family. Component of the 30S ribosomal translation pre-initiation complex which assembles on the 30S ribosome in the order IF-2 and IF-3, IF-1 and N-formylmethionyl-tRNA(fMet); mRNA recruitment can occur at any time during PIC assembly.

Its subcellular location is the cytoplasm. One of the essential components for the initiation of protein synthesis. Stabilizes the binding of IF-2 and IF-3 on the 30S subunit to which N-formylmethionyl-tRNA(fMet) subsequently binds. Helps modulate mRNA selection, yielding the 30S pre-initiation complex (PIC). Upon addition of the 50S ribosomal subunit IF-1, IF-2 and IF-3 are released leaving the mature 70S translation initiation complex. The polypeptide is Translation initiation factor IF-1 (Mycoplasmopsis synoviae (strain 53) (Mycoplasma synoviae)).